The following is a 409-amino-acid chain: MKKITTIFVVLLMTLALFIIGNTTAADDYSVVEEHGQLSISNGELVNDRGEPVQLKGMSSHGLQWYGQFVNYESMKWLRDDWGITVFRAAMYTSSGGYIEDPSVKEKVKEAVEAAIDLGIYVIIDWHILSDNDPNIYKEEAKDFFDEMSELYGDYPNVIYEIANEPNGSDVTWDNQIKPYAEEVIPVIRNNDPNNIIIVGTGTWSQDVHHAADNQLTDPNVMYAFHFYAGTHGQNLRDQVDYALDQGAAIFVSEWGTSEATGDGGVFLDEAQVWIDFMDERNLSWANWSLTHKDESSAALMPGASPTGGWTEAELSPSGTFVREKIRESATTPPSDPTPPSDPDPGEPEPDPGEPDPTPPSDPGDYPAWDPNTIYTDEIVYHNGQLWQAKWWTQNQEPGDPYGPWEPLN.

Substrate-binding positions include His61, 65-66, Tyr92, and His127; that span reads WY. The Proton donor role is filled by Glu165. Tyr228 lines the substrate pocket. Glu254 acts as the Nucleophile in catalysis. Substrate-binding positions include 260 to 261, Trp288, and 293 to 295; these read AT and KDE. The disordered stretch occupies residues 326 to 372; the sequence is IRESATTPPSDPTPPSDPDPGEPEPDPGEPDPTPPSDPGDYPAWDPN. Positions 334–343 are enriched in pro residues; sequence PSDPTPPSDP. The segment covering 344–354 has biased composition (acidic residues); it reads DPGEPEPDPGE.

The protein belongs to the glycosyl hydrolase 5 (cellulase A) family.

It catalyses the reaction Endohydrolysis of (1-&gt;4)-beta-D-glucosidic linkages in cellulose, lichenin and cereal beta-D-glucans.. The polypeptide is Endoglucanase B (celB) (Evansella cellulosilytica (strain ATCC 21833 / DSM 2522 / FERM P-1141 / JCM 9156 / N-4) (Bacillus cellulosilyticus)).